The primary structure comprises 250 residues: Pyridoxine 5'-phosphate synthase (250 aa).

Asn8 and Arg19 together coordinate 3-amino-2-oxopropyl phosphate. His44 functions as the Proton acceptor in the catalytic mechanism. 1-deoxy-D-xylulose 5-phosphate-binding residues include Arg46 and His51. Glu76 serves as the catalytic Proton acceptor. Residue Thr106 coordinates 1-deoxy-D-xylulose 5-phosphate. The active-site Proton donor is His200. 3-amino-2-oxopropyl phosphate-binding positions include Asp201 and 223-224 (GH).

The protein belongs to the PNP synthase family. Homooctamer; tetramer of dimers.

It localises to the cytoplasm. The enzyme catalyses 3-amino-2-oxopropyl phosphate + 1-deoxy-D-xylulose 5-phosphate = pyridoxine 5'-phosphate + phosphate + 2 H2O + H(+). The protein operates within cofactor biosynthesis; pyridoxine 5'-phosphate biosynthesis; pyridoxine 5'-phosphate from D-erythrose 4-phosphate: step 5/5. Catalyzes the complicated ring closure reaction between the two acyclic compounds 1-deoxy-D-xylulose-5-phosphate (DXP) and 3-amino-2-oxopropyl phosphate (1-amino-acetone-3-phosphate or AAP) to form pyridoxine 5'-phosphate (PNP) and inorganic phosphate. The protein is Pyridoxine 5'-phosphate synthase of Rhizobium meliloti (strain 1021) (Ensifer meliloti).